The primary structure comprises 398 residues: Tryptophan synthase beta chain (398 aa).

N6-(pyridoxal phosphate)lysine is present on K89.

Belongs to the TrpB family. Tetramer of two alpha and two beta chains. Pyridoxal 5'-phosphate serves as cofactor.

It catalyses the reaction (1S,2R)-1-C-(indol-3-yl)glycerol 3-phosphate + L-serine = D-glyceraldehyde 3-phosphate + L-tryptophan + H2O. It participates in amino-acid biosynthesis; L-tryptophan biosynthesis; L-tryptophan from chorismate: step 5/5. Functionally, the beta subunit is responsible for the synthesis of L-tryptophan from indole and L-serine. This chain is Tryptophan synthase beta chain, found in Methanopyrus kandleri (strain AV19 / DSM 6324 / JCM 9639 / NBRC 100938).